A 572-amino-acid chain; its full sequence is ATP-dependent lipid A-core flippase (572 aa).

The next 5 helical transmembrane spans lie at 14–34, 55–75, 148–168, 249–269, and 272–292; these read IIPY…VAAL, VFFL…KGVL, IFLL…CFLI, MEII…SEVI, and SATP…YDPV. An ABC transmembrane type-1 domain is found at 22 to 304; it reads FIAMFAMIVV…VSQVNSTIQQ (283 aa). The ABC transporter domain maps to 338-571; sequence IEFHDVSFSY…EGEYQLLYNM (234 aa). Residue 370–377 participates in ATP binding; that stretch reads GPSGGGKT.

The protein belongs to the ABC transporter superfamily. Lipid exporter (TC 3.A.1.106) family. As to quaternary structure, homodimer.

The protein localises to the cell inner membrane. The catalysed reaction is ATP + H2O + lipid A-core oligosaccharideSide 1 = ADP + phosphate + lipid A-core oligosaccharideSide 2.. Involved in lipopolysaccharide (LPS) biosynthesis. Translocates lipid A-core from the inner to the outer leaflet of the inner membrane. Transmembrane domains (TMD) form a pore in the inner membrane and the ATP-binding domain (NBD) is responsible for energy generation. The chain is ATP-dependent lipid A-core flippase from Desulfotalea psychrophila (strain LSv54 / DSM 12343).